The chain runs to 179 residues: MASQQMSTNNAQMSAQQAAVLQQTQAQQLSQQQDFDPVHRFKMLIPPLKDSLQNVMTIASLNFAHNTAIDNGLKTTEKGNDAAVQRFDKSLEEFYALCDQLELCLRLAHECLSQSIDSTKHSPNLVPTATKPDTVQTESLSYSQYLSMIKSQISCAKDIHNALLECSKKIAGKGQGACN.

This sequence belongs to the Mediator complex subunit 29 family. As to quaternary structure, component of the Mediator complex.

The protein localises to the nucleus. Its function is as follows. Component of the Mediator complex, a coactivator involved in the regulated transcription of nearly all RNA polymerase II-dependent genes. Mediator functions as a bridge to convey information from gene-specific regulatory proteins to the basal RNA polymerase II transcription machinery. Mediator is recruited to promoters by direct interactions with regulatory proteins and serves as a scaffold for the assembly of a functional preinitiation complex with RNA polymerase II and the general transcription factors. This Danio rerio (Zebrafish) protein is Mediator of RNA polymerase II transcription subunit 29 (med29).